Here is an 88-residue protein sequence, read N- to C-terminus: Small ribosomal subunit protein bS20 (88 aa).

The disordered stretch occupies residues 1–20; it reads MANIKQQKKRNKTNEKRRLR.

This sequence belongs to the bacterial ribosomal protein bS20 family.

Functionally, binds directly to 16S ribosomal RNA. In Phytoplasma australiense, this protein is Small ribosomal subunit protein bS20.